Here is a 71-residue protein sequence, read N- to C-terminus: Large ribosomal subunit protein uL29 (71 aa).

A disordered region spans residues methionine 1–glutamate 20.

It belongs to the universal ribosomal protein uL29 family.

The polypeptide is Large ribosomal subunit protein uL29 (Clostridium kluyveri (strain ATCC 8527 / DSM 555 / NBRC 12016 / NCIMB 10680 / K1)).